The following is a 399-amino-acid chain: Sister chromatid cohesion protein DCC1 (399 aa).

Belongs to the DCC1 family. In terms of assembly, component of the CTF18-RFC complex which consists of CTF8, CTF18, DSCC1 and the RFC complex. Interacts with CTF8 and CTF18. Interacts with DDX11.

The protein resides in the nucleus. Its function is as follows. Loads PCNA onto primed templates regulating velocity, spacing and restart activity of replication forks. May couple DNA replication to sister chromatid cohesion through regulation of the acetylation of the cohesin subunit SMC3. The chain is Sister chromatid cohesion protein DCC1 (DSCC1) from Mus musculus (Mouse).